The chain runs to 100 residues: Large ribosomal subunit protein uL23 (100 aa).

The protein belongs to the universal ribosomal protein uL23 family. As to quaternary structure, part of the 50S ribosomal subunit. Contacts protein L29, and trigger factor when it is bound to the ribosome.

Its function is as follows. One of the early assembly proteins it binds 23S rRNA. One of the proteins that surrounds the polypeptide exit tunnel on the outside of the ribosome. Forms the main docking site for trigger factor binding to the ribosome. In Synechococcus sp. (strain RCC307), this protein is Large ribosomal subunit protein uL23.